The primary structure comprises 557 residues: T-complex protein 1 subunit eta (557 aa).

Ala-2 is subject to N-acetylalanine. Positions 529-557 (PKSESAQGDAAGAMGRGRGGGRGRGMRRR) are disordered. Over residues 547 to 557 (GGGRGRGMRRR) the composition is skewed to basic residues.

Belongs to the TCP-1 chaperonin family. As to quaternary structure, heterooligomeric complex of about 850 to 900 kDa that forms two stacked rings, 12 to 16 nm in diameter. Interacts with KNAT1.

The protein resides in the cytoplasm. Functionally, molecular chaperone; assists the folding of proteins upon ATP hydrolysis. Known to play a role, in vitro, in the folding of actin and tubulin. The polypeptide is T-complex protein 1 subunit eta (Arabidopsis thaliana (Mouse-ear cress)).